The following is a 144-amino-acid chain: Large ribosomal subunit protein uL11 (144 aa).

It belongs to the universal ribosomal protein uL11 family. As to quaternary structure, part of the ribosomal stalk of the 50S ribosomal subunit. Interacts with L10 and the large rRNA to form the base of the stalk. L10 forms an elongated spine to which L12 dimers bind in a sequential fashion forming a multimeric L10(L12)X complex. In terms of processing, one or more lysine residues are methylated.

Functionally, forms part of the ribosomal stalk which helps the ribosome interact with GTP-bound translation factors. The protein is Large ribosomal subunit protein uL11 of Saccharopolyspora erythraea (strain ATCC 11635 / DSM 40517 / JCM 4748 / NBRC 13426 / NCIMB 8594 / NRRL 2338).